The chain runs to 453 residues: Allantoinase (453 aa).

His59, His61, Lys146, His186, His242, and Asp315 together coordinate Zn(2+). Position 146 is an N6-carboxylysine (Lys146).

It belongs to the metallo-dependent hydrolases superfamily. Allantoinase family. In terms of assembly, homotetramer. Zn(2+) serves as cofactor. Carboxylation allows a single lysine to coordinate two zinc ions.

The catalysed reaction is (S)-allantoin + H2O = allantoate + H(+). Its pathway is nitrogen metabolism; (S)-allantoin degradation; allantoate from (S)-allantoin: step 1/1. Functionally, catalyzes the conversion of allantoin (5-ureidohydantoin) to allantoic acid by hydrolytic cleavage of the five-member hydantoin ring. This Salmonella choleraesuis (strain SC-B67) protein is Allantoinase.